The following is a 309-amino-acid chain: Putative F-box protein At4g05475 (309 aa).

The interval 1-26 (MATSTTLQSLLMKEDEEQRNKRRTTS) is disordered. The F-box domain occupies 37-84 (RINWVDLPPELTTSILLRLSVTDILDNARKLCRAWRRICKDPSMWRKI).

The sequence is that of Putative F-box protein At4g05475 from Arabidopsis thaliana (Mouse-ear cress).